We begin with the raw amino-acid sequence, 987 residues long: Sarcosine oxidase subunit alpha (987 aa).

NAD(+) contacts are provided by Asp-198, Glu-199, Ser-206, Ala-244, and Gly-445. Thr-714 and Glu-806 together coordinate (6R)-5,10-methylene-5,6,7,8-tetrahydrofolate.

Belongs to the GcvT family. Heterotetramer composed of subunits alpha (SoxA), beta (SoxB), gamma (SoxG) and delta (SoxD). The cofactor is NAD(+).

The protein resides in the cytoplasm. It carries out the reaction sarcosine + (6S)-5,6,7,8-tetrahydrofolate + O2 = (6R)-5,10-methylene-5,6,7,8-tetrahydrofolate + glycine + H2O2. The catalysed reaction is sarcosine + O2 + H2O = formaldehyde + glycine + H2O2. Its function is as follows. In the presence of tetrahydrofolate, catalyzes the oxidative demethylation of sarcosine to yield glycine, 5,10-methylenetetrahydrofolate and hydrogen peroxide. In the absence of tetrahydrofolate, catalyzes the oxidative demethylation of sarcosine to yield glycine, formaldehyde and hydrogen peroxide. This is Sarcosine oxidase subunit alpha (soxA) from Rhizobium meliloti (strain 1021) (Ensifer meliloti).